The sequence spans 226 residues: Phosphoribosylformylglycinamidine synthase subunit PurQ (226 aa).

Positions 3–225 (FAVIVFPGSN…VKWGARHVTY (223 aa)) constitute a Glutamine amidotransferase type-1 domain. Residue C86 is the Nucleophile of the active site. Active-site residues include H194 and E196.

Part of the FGAM synthase complex composed of 1 PurL, 1 PurQ and 2 PurS subunits.

Its subcellular location is the cytoplasm. It carries out the reaction N(2)-formyl-N(1)-(5-phospho-beta-D-ribosyl)glycinamide + L-glutamine + ATP + H2O = 2-formamido-N(1)-(5-O-phospho-beta-D-ribosyl)acetamidine + L-glutamate + ADP + phosphate + H(+). The enzyme catalyses L-glutamine + H2O = L-glutamate + NH4(+). Its pathway is purine metabolism; IMP biosynthesis via de novo pathway; 5-amino-1-(5-phospho-D-ribosyl)imidazole from N(2)-formyl-N(1)-(5-phospho-D-ribosyl)glycinamide: step 1/2. Its function is as follows. Part of the phosphoribosylformylglycinamidine synthase complex involved in the purines biosynthetic pathway. Catalyzes the ATP-dependent conversion of formylglycinamide ribonucleotide (FGAR) and glutamine to yield formylglycinamidine ribonucleotide (FGAM) and glutamate. The FGAM synthase complex is composed of three subunits. PurQ produces an ammonia molecule by converting glutamine to glutamate. PurL transfers the ammonia molecule to FGAR to form FGAM in an ATP-dependent manner. PurS interacts with PurQ and PurL and is thought to assist in the transfer of the ammonia molecule from PurQ to PurL. The sequence is that of Phosphoribosylformylglycinamidine synthase subunit PurQ from Exiguobacterium sp. (strain ATCC BAA-1283 / AT1b).